The sequence spans 559 residues: Probable alpha-(1-&gt;6)-mannopyranosyltransferase MSMEG_3120/MSMEI_3041 (559 aa).

A run of 12 helical transmembrane segments spans residues 41 to 61 (FGATGTVLMAIGALGAGARPV), 81 to 101 (VSLTMTTTGAVMMALAWLMLG), 202 to 222 (IVEAVMCHRLVVLIGVGLIVW), 247 to 267 (LLFMHLVAGIHNEALMLGLML), 300 to 316 (WQPMAMLVLGAVLIAMS), 321 to 340 (LPSLLALGFVAMALAWRWGG), 355 to 375 (ISLAVMAVIGWASGLGFGWLF), 386 to 406 (WMSPPTLIALGTGQVGILLGL), 419 to 439 (AIGVFMISILVSWLLFAVLRG), 455 to 475 (VLLFPVVQPWYLLWAIIPLAA), 480 to 500 (PGFRGATIAITLIVGIFGPTA), and 507 to 527 (LFQIVMATLASAVTVLLLIAL). A compositionally biased stretch (pro residues) spans 535 to 548 (RPAPEPPARPPEQP). The interval 535 to 559 (RPAPEPPARPPEQPAPADDAYAESP) is disordered.

This sequence belongs to the MptA/B family.

It localises to the membrane. Catalyzes the addition of alpha-(1-&gt;6)-mannose residue. This chain is Probable alpha-(1-&gt;6)-mannopyranosyltransferase MSMEG_3120/MSMEI_3041, found in Mycolicibacterium smegmatis (strain ATCC 700084 / mc(2)155) (Mycobacterium smegmatis).